The primary structure comprises 313 residues: Porphobilinogen deaminase (313 aa).

An S-(dipyrrolylmethanemethyl)cysteine modification is found at Cys-241.

It belongs to the HMBS family. Monomer. Dipyrromethane serves as cofactor.

The catalysed reaction is 4 porphobilinogen + H2O = hydroxymethylbilane + 4 NH4(+). It functions in the pathway porphyrin-containing compound metabolism; protoporphyrin-IX biosynthesis; coproporphyrinogen-III from 5-aminolevulinate: step 2/4. It participates in porphyrin-containing compound metabolism; chlorophyll biosynthesis. In terms of biological role, tetrapolymerization of the monopyrrole PBG into the hydroxymethylbilane pre-uroporphyrinogen in several discrete steps. The sequence is that of Porphobilinogen deaminase from Chlorobium limicola (strain DSM 245 / NBRC 103803 / 6330).